The chain runs to 399 residues: Acetate kinase (399 aa).

N10 is a binding site for Mg(2+). K17 contacts ATP. A substrate-binding site is contributed by R91. D148 serves as the catalytic Proton donor/acceptor. Residues 208–212, 283–285, and 331–335 each bind ATP; these read HLGNG, DCR, and GIGEN. E385 contacts Mg(2+).

The protein belongs to the acetokinase family. As to quaternary structure, homodimer. Requires Mg(2+) as cofactor. Mn(2+) is required as a cofactor.

Its subcellular location is the cytoplasm. It carries out the reaction acetate + ATP = acetyl phosphate + ADP. It functions in the pathway metabolic intermediate biosynthesis; acetyl-CoA biosynthesis; acetyl-CoA from acetate: step 1/2. In terms of biological role, catalyzes the formation of acetyl phosphate from acetate and ATP. Can also catalyze the reverse reaction. This is Acetate kinase from Shewanella amazonensis (strain ATCC BAA-1098 / SB2B).